Consider the following 302-residue polypeptide: 33 kDa chaperonin (302 aa).

Cystine bridges form between cysteine 234–cysteine 236 and cysteine 267–cysteine 270.

It belongs to the HSP33 family. Post-translationally, under oxidizing conditions two disulfide bonds are formed involving the reactive cysteines. Under reducing conditions zinc is bound to the reactive cysteines and the protein is inactive.

Its subcellular location is the cytoplasm. Its function is as follows. Redox regulated molecular chaperone. Protects both thermally unfolding and oxidatively damaged proteins from irreversible aggregation. Plays an important role in the bacterial defense system toward oxidative stress. This chain is 33 kDa chaperonin, found in Neisseria gonorrhoeae (strain NCCP11945).